We begin with the raw amino-acid sequence, 989 residues long: Vacuolar membrane protease (989 aa).

The segment at 1–25 is disordered; that stretch reads MDRQSLRTTLRAMDASNENGSAKGA. Residues 1 to 41 are Cytoplasmic-facing; that stretch reads MDRQSLRTTLRAMDASNENGSAKGAKKTTIGSFVRWTFGFN. Residues 42 to 62 form a helical membrane-spanning segment; the sequence is SVPLTTLVTITTVLLGLLVYV. Topologically, residues 63–383 are vacuolar; it reads STSVNPPDVT…YLFIILPLQY (321 aa). Zn(2+) contacts are provided by H181 and D193. E227 serves as the catalytic Proton acceptor. A Zn(2+)-binding site is contributed by E228. An N-linked (GlcNAc...) asparagine glycan is attached at N245. Zn(2+) is bound by residues E253 and H325. A helical membrane pass occupies residues 384–404; that stretch reads IFVISCLTLAVGPIFVGFLFL. At 405 to 426 the chain is on the cytoplasmic side; it reads LVLRKQINAGTSETILGGWLRS. Residues 427–447 form a helical membrane-spanning segment; sequence IVSVLVSVVATYFVVETLHLG. Over 448 to 460 the chain is Vacuolar; it reads NELYVVRSFYTPL. Residues 461 to 481 form a helical membrane-spanning segment; the sequence is FAGLGTFIFVNYVLLGFFHFV. Residues 482-488 are Cytoplasmic-facing; that stretch reads RPVCDQK. A helical transmembrane segment spans residues 489–509; that stretch reads LIILLELSVVLWVLLLLSVIH. The Vacuolar segment spans residues 510-520; sequence EATHKATGEYH. Residues 521 to 541 traverse the membrane as a helical segment; it reads FLILYIVVATASILGLFGHLV. Residues 542–611 are Cytoplasmic-facing; sequence TSTETSTFVE…IAVSMGYDWS (70 aa). Residues 548–576 are disordered; sequence TFVEGPEDEEDTVDASEATETSPLLPEAS. A compositionally biased stretch (acidic residues) spans 552–561; that stretch reads GPEDEEDTVD. Residues 612 to 632 form a helical membrane-spanning segment; sequence IQFLLVVPITFFVTFGLAASL. Residues 633–648 lie on the Vacuolar side of the membrane; it reads LDGLHQTPLESEKSAD. Residues 649 to 669 form a helical membrane-spanning segment; sequence FVYTTITAMSVLVGITFLPFV. Over 670-673 the chain is Cytoplasmic; sequence HKLQ. Residues 674 to 694 form a helical membrane-spanning segment; it reads VFVPIVVVGVAVTASFVHILS. The Vacuolar portion of the chain corresponds to 695 to 989; sequence PPFSSNAPAK…LVEVSKYVEL (295 aa). N745, N793, and N822 each carry an N-linked (GlcNAc...) asparagine glycan.

The protein belongs to the peptidase M28 family. The cofactor is Zn(2+).

The protein localises to the vacuole membrane. Its function is as follows. May be involved in vacuolar sorting and osmoregulation. The protein is Vacuolar membrane protease of Yarrowia lipolytica (strain CLIB 122 / E 150) (Yeast).